A 477-amino-acid chain; its full sequence is Phosphatidylinositol 4-kinase type 2-beta (477 aa).

A disordered region spans residues 1–80 (MPEPPRDIMA…EDRSISASLS (80 aa)). At Ser45 the chain carries Phosphoserine. The region spanning 116–447 (GVFPERISQG…AQMPCVIVEC (332 aa)) is the PI3K/PI4K catalytic domain. Positions 122 to 128 (ISQGSSG) are G-loop. Residues Ser129 and Lys144 each contribute to the ATP site. Positions 149 to 151 (EPY) are important for substrate binding. Residues 157 to 170 (KWTKYVHKVCCPCC) are important for interaction with membranes. ATP is bound by residues 253 to 256 (QLFV) and 267 to 268 (RR). The important for interaction with membranes stretch occupies residues 260-268 (KEAEYWLRR). The segment at 297 to 305 (RNTDRGNDN) is catalytic loop. An activation loop region spans residues 338 to 358 (AIDNGLAFPFKHPDEWRAYPF). ATP is bound at residue Asp340. The segment at 353–362 (WRAYPFHWAW) is important for interaction with membranes.

Belongs to the PI3/PI4-kinase family. Type II PI4K subfamily.

Its subcellular location is the cytoplasm. It is found in the cytosol. It localises to the golgi apparatus membrane. The protein localises to the endoplasmic reticulum membrane. The protein resides in the cell membrane. Its subcellular location is the early endosome membrane. The enzyme catalyses a 1,2-diacyl-sn-glycero-3-phospho-(1D-myo-inositol) + ATP = a 1,2-diacyl-sn-glycero-3-phospho-(1D-myo-inositol 4-phosphate) + ADP + H(+). In terms of biological role, together with PI4K2A and the type III PI4Ks (PIK4CA and PIK4CB) it contributes to the overall PI4-kinase activity of the cell. This contribution may be especially significant in plasma membrane, endosomal and Golgi compartments. The phosphorylation of phosphatidylinositol (PI) to PI4P is the first committed step in the generation of phosphatidylinositol 4,5-bisphosphate (PIP2), a precursor of the second messenger inositol 1,4,5-trisphosphate (InsP3). Contributes to the production of InsP3 in stimulated cells and is likely to be involved in the regulation of vesicular trafficking. The polypeptide is Phosphatidylinositol 4-kinase type 2-beta (Pi4k2b) (Rattus norvegicus (Rat)).